Consider the following 63-residue polypeptide: Sec-independent protein translocase protein TatA (63 aa).

The helical transmembrane segment at 1-21 threads the bilayer; sequence MGGLSVGSVVLIALVALLIFG.

The protein belongs to the TatA/E family. Forms a complex with TatC.

The protein resides in the cell membrane. In terms of biological role, part of the twin-arginine translocation (Tat) system that transports large folded proteins containing a characteristic twin-arginine motif in their signal peptide across membranes. TatA could form the protein-conducting channel of the Tat system. The protein is Sec-independent protein translocase protein TatA of Shouchella clausii (strain KSM-K16) (Alkalihalobacillus clausii).